We begin with the raw amino-acid sequence, 154 residues long: 6,7-dimethyl-8-ribityllumazine synthase (154 aa).

Residues phenylalanine 26, 60–62 (ALE), and 84–86 (CII) each bind 5-amino-6-(D-ribitylamino)uracil. Position 89–90 (89–90 (ET)) interacts with (2S)-2-hydroxy-3-oxobutyl phosphate. The Proton donor role is filled by histidine 92. Position 117 (asparagine 117) interacts with 5-amino-6-(D-ribitylamino)uracil. Arginine 131 is a (2S)-2-hydroxy-3-oxobutyl phosphate binding site.

Belongs to the DMRL synthase family.

The enzyme catalyses (2S)-2-hydroxy-3-oxobutyl phosphate + 5-amino-6-(D-ribitylamino)uracil = 6,7-dimethyl-8-(1-D-ribityl)lumazine + phosphate + 2 H2O + H(+). It functions in the pathway cofactor biosynthesis; riboflavin biosynthesis; riboflavin from 2-hydroxy-3-oxobutyl phosphate and 5-amino-6-(D-ribitylamino)uracil: step 1/2. In terms of biological role, catalyzes the formation of 6,7-dimethyl-8-ribityllumazine by condensation of 5-amino-6-(D-ribitylamino)uracil with 3,4-dihydroxy-2-butanone 4-phosphate. This is the penultimate step in the biosynthesis of riboflavin. The chain is 6,7-dimethyl-8-ribityllumazine synthase from Acidovorax sp. (strain JS42).